Reading from the N-terminus, the 457-residue chain is Heme sensor protein HssS (457 aa).

2 helical membrane passes run 9–29 (IAIY…VLTN) and 164–184 (TFLA…VIAS). Residues 186-238 (YSIIRPVKKLKLATERLIDGDFETPIKQTRKDEIGTLQYHFNKMRESLGQVDQ) enclose the HAMP domain. One can recognise a Histidine kinase domain in the interval 246–456 (NVSHEIKTPL…TFTITLPNNS (211 aa)). His249 bears the Phosphohistidine; by autocatalysis mark.

In terms of processing, autophosphorylated.

It localises to the cell membrane. It catalyses the reaction ATP + protein L-histidine = ADP + protein N-phospho-L-histidine.. Functionally, member of the two-component regulatory system HssS/HssR involved in intracellular heme homeostasis and tempering of staphylococcal virulence. HssS functions as a heme sensor histidine kinase which is autophosphorylated at a histidine residue and transfers its phosphate group to an aspartate residue of HssR. HssR/HssS activates the expression of hrtAB, an efflux pump, in response to extracellular heme, hemin, hemoglobin or blood. This Staphylococcus aureus (strain MSSA476) protein is Heme sensor protein HssS (hssS).